A 677-amino-acid polypeptide reads, in one-letter code: MQPTLLLSLLGAVGLAAVNSMPVDNRNHNEGMVTRCIIEVLSNALSKSSAPPITPECRQVLKTSRKDVKDKETTENENTKFEVRLLRDPADASEAHESSSRGEAGAPGEEDIQGPTKADTEKWAEGGGHSRERADEPQWSLYPSDSQVSEEVKTRHSEKSQREDEEEEEGENYQKGERGEDSSEEKHLEEPGETQNAFLNERKQASAIKKEELVARSETHAAGHSQEKTHSREKSSQESGEETGSQENHPQESKGQPRSQEESEEGEEDATSEVDKRRTRPRHHHGRSRPDRSSQGGSLPSEEKGHPQEESEESNVSMASLGEKRDHHSTHYRASEEEPEYGEEIKGYPGVQAPEDLEWERYRGRGSEEYRAPRPQSEESWDEEDKRNYPSLELDKMAHGYGEESEEERGLEPGKGRHHRGRGGEPRAYFMSDTREEKRFLGEGHHRVQENQMDKARRHPQGAWKELDRNYLNYGEEGAPGKWQQQGDLQDTKENREEARFQDKQYSSHHTAEKRKRLGELFNPYYDPLQWKSSHFERRDNMNDNFLEGEEENELTLNEKNFFPEYNYDWWEKKPFSEDVNWGYEKRNLARVPKLDLKRQYDRVAQLDQLLHYRKKSAEFPDFYDSEEPVSTHQEAENEKDRADQTVLTEDEKKELENLAAMDLELQKIAEKFSQRG.

An N-terminal signal peptide occupies residues 1 to 20; that stretch reads MQPTLLLSLLGAVGLAAVNS. Cysteine 36 and cysteine 57 are joined by a disulfide. 2 stretches are compositionally biased toward basic and acidic residues: residues 64–100 and 118–136; these read SRKDVKDKETTENENTKFEVRLLRDPADASEAHESSS and ADTEKWAEGGGHSRERADE. Positions 64 to 463 are disordered; sequence SRKDVKDKET…DKARRHPQGA (400 aa). A Phosphothreonine modification is found at threonine 79. Residues serine 93, serine 99, and serine 100 each carry the phosphoserine modification. An O-linked (Xyl...) (chondroitin sulfate) serine glycan is attached at serine 93. The O-glycosylated at one site stretch occupies residues 116 to 120; sequence TKADT. Serine 130 is modified (phosphoserine; by FAM20C). Serine 149 bears the Phosphoserine mark. Composition is skewed to basic and acidic residues over residues 150–162, 172–190, and 200–236; these read EEVKTRHSEKSQR, NYQKGERGEDSSEEKHLEE, and NERKQASAIKKEELVARSETHAAGHSQEKTHSREKSS. Position 183 is a phosphoserine (serine 183). The residue at position 225 (serine 225) is a Phosphoserine; by FAM20C. An O-linked (Xyl...) (chondroitin sulfate) serine glycan is attached at serine 239. Phosphoserine is present on residues serine 259 and serine 263. Residues 262–272 are compositionally biased toward acidic residues; it reads ESEEGEEDATS. A compositionally biased stretch (basic residues) spans 277–287; that stretch reads RRTRPRHHHGR. Phosphoserine occurs at positions 293, 294, 311, and 335. The residue at position 341 (tyrosine 341) is a Sulfotyrosine. A compositionally biased stretch (basic and acidic residues) spans 359-372; the sequence is WERYRGRGSEEYRA. A phosphoserine; by FAM20C mark is found at serine 367, serine 377, and serine 380. Basic and acidic residues-rich tracts occupy residues 384–415 and 433–455; these read EDKRNYPSLELDKMAHGYGEESEEERGLEPGK and DTREEKRFLGEGHHRVQENQMDK. Tyrosine 401 carries the phosphotyrosine modification. Position 405 is a phosphoserine (serine 405). Sulfotyrosine is present on tyrosine 474. The interval 475 to 512 is disordered; that stretch reads GEEGAPGKWQQQGDLQDTKENREEARFQDKQYSSHHTA. The segment covering 490-503 has biased composition (basic and acidic residues); sequence QDTKENREEARFQD. 2 positions are modified to phosphoserine: serine 533 and serine 534. Tyrosine 566 carries the post-translational modification Sulfotyrosine. Serine 617 is modified (phosphoserine). The tract at residues 622–653 is disordered; sequence DFYDSEEPVSTHQEAENEKDRADQTVLTEDEK. Tyrosine 624 bears the Sulfotyrosine mark. Phosphoserine occurs at positions 626 and 631. Basic and acidic residues predominate over residues 634 to 653; that stretch reads QEAENEKDRADQTVLTEDEK.

The protein belongs to the chromogranin/secretogranin protein family. Interacts with ITPR1 in the secretory granules. In terms of processing, extensively processed by limited proteolysis at conserved basic residues. Alternative processing are seen in different tissues. Post-translationally, O-glycosylated. As to expression, detected in cerebrospinal fluid and urine (at protein level). Expressed in the adrenal medulla, and in pheochromocytoma. Not expressed in liver.

It localises to the secreted. In terms of biological role, secretogranin-1 is a neuroendocrine secretory granule protein, which may be the precursor for other biologically active peptides. The protein is Secretogranin-1 (CHGB) of Homo sapiens (Human).